A 148-amino-acid chain; its full sequence is SsrA-binding protein (148 aa).

This sequence belongs to the SmpB family.

The protein localises to the cytoplasm. In terms of biological role, required for rescue of stalled ribosomes mediated by trans-translation. Binds to transfer-messenger RNA (tmRNA), required for stable association of tmRNA with ribosomes. tmRNA and SmpB together mimic tRNA shape, replacing the anticodon stem-loop with SmpB. tmRNA is encoded by the ssrA gene; the 2 termini fold to resemble tRNA(Ala) and it encodes a 'tag peptide', a short internal open reading frame. During trans-translation Ala-aminoacylated tmRNA acts like a tRNA, entering the A-site of stalled ribosomes, displacing the stalled mRNA. The ribosome then switches to translate the ORF on the tmRNA; the nascent peptide is terminated with the 'tag peptide' encoded by the tmRNA and targeted for degradation. The ribosome is freed to recommence translation, which seems to be the essential function of trans-translation. This Ehrlichia ruminantium (strain Welgevonden) protein is SsrA-binding protein.